The following is a 758-amino-acid chain: Glucocorticoid receptor (758 aa).

2 disordered regions span residues 1–61 (MDPG…SANG) and 349–382 (GMSS…PSGP). The modulating stretch occupies residues 1-386 (MDPGGLKHSK…AKPSGPTHKI (386 aa)). The segment covering 26 to 42 (GSFSGDTGGSKSTTSTS) has biased composition (low complexity). 2 consecutive NR C4-type zinc fingers follow at residues 387–407 (CLVC…CGSC) and 432–456 (CAGR…FRKC). A DNA-binding region (nuclear receptor) is located at residues 387 to 461 (CLVCSDEASG…RFRKCLQAGM (75 aa)). Residues 462–498 (NLEARKNKKLIRLKGQQTTMEPNPPPPDERACALIPK) form a hinge region. In terms of domain architecture, NR LBD spans 499-733 (SMPQLVPTML…FPEMLAEIIS (235 aa)).

It belongs to the nuclear hormone receptor family. NR3 subfamily. As to quaternary structure, heteromultimeric cytoplasmic complex with HSP90AA1, HSPA1A/HSPA1B, and FKBP5 or another immunophilin such as PPID, STIP1, or the immunophilin homolog PPP5C. Upon ligand binding FKBP5 dissociates from the complex and FKBP4 takes its place, thereby linking the complex to dynein and mediating transport to the nucleus, where the complex dissociates. Directly interacts with UNC45A. Binds to DNA as a homodimer, and as heterodimer with NR3C2 or the retinoid X receptor. Binds STAT5A and STAT5B homodimers and heterodimers. Interacts with NRIP1, POU2F1, POU2F2 and TRIM28. Interacts with several coactivator complexes, including the SMARCA4 complex, CREBBP/EP300, TADA2L (Ada complex) and p160 coactivators such as NCOA2 and NCOA6. Interaction with BAG1 inhibits transactivation. Interacts with HEXIM1, PELP1 and TGFB1I1. Interacts with NCOA1, NCOA3, SMARCA4, SMARCC1, SMARCD1, and SMARCE1. Phosphorylated in the absence of hormone; becomes hyperphosphorylated in the presence of glucocorticoids. May be dephosphorylated by PPP5C, attenuates NR3C1 action. Isoform 1 is expressed in all tissues tested including liver, gills, intestine, skeletal muscle, kidney, heart, spleen, stomach, brain, pituitary, ovary, testis, skin and bladder. Isoform 2 is found only in testis.

It is found in the cytoplasm. Its subcellular location is the nucleus. It localises to the mitochondrion. The protein localises to the cytoskeleton. The protein resides in the spindle. It is found in the microtubule organizing center. Its subcellular location is the centrosome. Functionally, receptor for glucocorticoids (GC). Has a dual mode of action: as a transcription factor that binds to glucocorticoid response elements (GRE), both for nuclear and mitochondrial DNA, and as a modulator of other transcription factors. Affects inflammatory responses, cellular proliferation and differentiation in target tissues. Involved in chromatin remodeling. Plays a role in rapid mRNA degradation by binding to the 5' UTR of target mRNAs and interacting with PNRC2 in a ligand-dependent manner which recruits the RNA helicase UPF1 and the mRNA-decapping enzyme DCP1A, leading to RNA decay. Could act as a coactivator for STAT5-dependent transcription upon growth hormone (GH) stimulation and could reveal an essential role of hepatic GR in the control of body growth. Mediates glucocorticoid-induced apoptosis. Promotes accurate chromosome segregation during mitosis. May act as a tumor suppressor. May play a negative role in adipogenesis through the regulation of lipolytic and antilipogenic gene expression. This chain is Glucocorticoid receptor (nr3c1), found in Oncorhynchus mykiss (Rainbow trout).